The chain runs to 497 residues: 4,4'-diaponeurosporene oxygenase (497 aa).

7–19 lines the FAD pocket; it reads VIGGGLGGISAAI.

Belongs to the carotenoid/retinoid oxidoreductase family. CrtP subfamily. FAD serves as cofactor.

The enzyme catalyses all-trans-4,4'-diaponeurosporene + 2 AH2 + 2 O2 = 4,4'-diaponeurosporenal + 2 A + 3 H2O. It participates in carotenoid biosynthesis; staphyloxanthin biosynthesis; staphyloxanthin from farnesyl diphosphate: step 3/5. Involved in the biosynthesis of the yellow-orange carotenoid staphyloxanthin, which plays a role in the virulence via its protective function against oxidative stress. Catalyzes the oxidation of the terminal methyl side group of 4,4'-diaponeurosporene to form 4,4'-diaponeurosporen-4-al. In Staphylococcus aureus (strain MW2), this protein is 4,4'-diaponeurosporene oxygenase.